Consider the following 1150-residue polypeptide: Alpha-mannosidase 2 (1150 aa).

At 1 to 5 (MKLSR) the chain is on the cytoplasmic side. The chain crosses the membrane as a helical; Signal-anchor for type II membrane protein span at residues 6–26 (QFTVFGSAIFCVVIFSLYLML). Over 27 to 1150 (DRGHLDYPRG…STFRIRLRWT (1124 aa)) the chain is Lumenal. N-linked (GlcNAc...) asparagine glycosylation occurs at Asn78. Phosphoserine occurs at positions 80 and 82. N-linked (GlcNAc...) asparagine glycosylation occurs at Asn93. Positions 174, 176, 288, and 568 each coordinate Zn(2+). Catalysis depends on Asp288, which acts as the Nucleophile. Residue Asn1129 is glycosylated (N-linked (GlcNAc...) asparagine).

This sequence belongs to the glycosyl hydrolase 38 family. Homodimer; disulfide-linked. It depends on Zn(2+) as a cofactor. In terms of processing, glycosylated. In terms of tissue distribution, all tissues, mostly in adrenal and thymus.

It localises to the golgi apparatus membrane. The catalysed reaction is N(4)-{beta-D-GlcNAc-(1-&gt;2)-alpha-D-Man-(1-&gt;3)-[alpha-D-Man-(1-&gt;3)-[alpha-D-Man-(1-&gt;6)]-alpha-D-Man-(1-&gt;6)]-beta-D-Man-(1-&gt;4)-beta-D-GlcNAc-(1-&gt;4)-beta-D-GlcNAc}-L-asparaginyl-[protein] + 2 H2O = 2 alpha-D-mannopyranose + an N(4)-{beta-D-GlcNAc-(1-&gt;2)-alpha-D-Man-(1-&gt;3)-[alpha-D-Man-(1-&gt;6)]-beta-D-Man-(1-&gt;4)-beta-D-GlcNAc-(1-&gt;4)-beta-D-GlcNAc}-L-asparaginyl-[protein]. It functions in the pathway protein modification; protein glycosylation. In terms of biological role, catalyzes the first committed step in the biosynthesis of complex N-glycans. It controls conversion of high mannose to complex N-glycans; the final hydrolytic step in the N-glycan maturation pathway. This chain is Alpha-mannosidase 2 (Man2a1), found in Mus musculus (Mouse).